Consider the following 232-residue polypeptide: Anti-sigma-K factor RskA (232 aa).

Topologically, residues 1–90 (MTEHTDFELL…EVRRQSRWRT (90 aa)) are cytoplasmic. The chain crosses the membrane as a helical span at residues 91–111 (AAFASAAAIAVGLGAFGLGVL). At 112–232 (TRPSPPPTVA…GTILAELPLG (121 aa)) the chain is on the extracellular side.

This sequence belongs to the anti-sigma-K factor family.

The protein resides in the cell membrane. Its function is as follows. An anti-sigma factor for extracytoplasmic function (ECF) sigma factor SigK. ECF sigma factors are held in an inactive form by an anti-sigma factor until released by regulated intramembrane proteolysis (RIP). RIP occurs when an extracytoplasmic signal triggers a concerted proteolytic cascade to transmit information and elicit cellular responses. The membrane-spanning regulatory substrate protein is first cut extracytoplasmically (site-1 protease, S1P), then within the membrane itself (site-2 protease, S2P, Rip1), while cytoplasmic proteases finish degrading the regulatory protein, liberating the sigma factor. This Mycobacterium tuberculosis (strain ATCC 25177 / H37Ra) protein is Anti-sigma-K factor RskA (rskA).